Consider the following 182-residue polypeptide: Probable RNA 2'-phosphotransferase (182 aa).

This sequence belongs to the KptA/TPT1 family.

Its function is as follows. Removes the 2'-phosphate from RNA via an intermediate in which the phosphate is ADP-ribosylated by NAD followed by a presumed transesterification to release the RNA and generate ADP-ribose 1''-2''-cyclic phosphate (APPR&gt;P). May function as an ADP-ribosylase. The sequence is that of Probable RNA 2'-phosphotransferase from Pseudomonas paraeruginosa (strain DSM 24068 / PA7) (Pseudomonas aeruginosa (strain PA7)).